The sequence spans 366 residues: Neutral protease 2 homolog BDBG_02110 (366 aa).

The first 19 residues, 1–19, serve as a signal peptide directing secretion; the sequence is MQLSSVLLTAAGLLAPVYS. A propeptide spanning residues 23 to 184 is cleaved from the precursor; the sequence is ISIGRRSEGL…RAKIHDHLAQ (162 aa). 2 N-linked (GlcNAc...) asparagine glycosylation sites follow: asparagine 123 and asparagine 192. Cysteine 272 and cysteine 290 are joined by a disulfide. Histidine 314 serves as a coordination point for Zn(2+). Glutamate 315 is an active-site residue. A Zn(2+)-binding site is contributed by histidine 318.

Belongs to the peptidase M35 family. The cofactor is Zn(2+).

The protein resides in the secreted. It carries out the reaction Preferential cleavage of bonds with hydrophobic residues in P1'. Also 3-Asn-|-Gln-4 and 8-Gly-|-Ser-9 bonds in insulin B chain.. Functionally, secreted metalloproteinase that allows assimilation of proteinaceous substrates. Shows high activities on basic nuclear substrates such as histone and protamine. The chain is Neutral protease 2 homolog BDBG_02110 from Blastomyces gilchristii (strain SLH14081) (Blastomyces dermatitidis).